The primary structure comprises 433 residues: ACT domain-containing protein ACR6 (433 aa).

4 ACT domains span residues 30-110, 120-207, 250-326, and 328-402; these read VIQV…RSSV, SIEL…SCSD, VVTM…ASEG, and ELEL…VKKK.

In terms of biological role, may bind amino acids. This chain is ACT domain-containing protein ACR6, found in Arabidopsis thaliana (Mouse-ear cress).